A 307-amino-acid polypeptide reads, in one-letter code: Transmembrane protein 200B (307 aa).

Positions 1-38 (MTAGSPEECGEVRRSPEGRVSRLGRRLGRRRRPRSPPE) are disordered. The span at 10–20 (GEVRRSPEGRV) shows a compositional bias: basic and acidic residues. Positions 22–34 (RLGRRLGRRRRPR) are enriched in basic residues. The helical transmembrane segment at 53–73 (GAFAALGALVVLVGMGIAVAG) threads the bilayer. The interval 81-111 (APGSRAANASSPQMSELRREGRGGGRAHGPH) is disordered. Asn-88 is a glycosylation site (N-linked (GlcNAc...) asparagine). The segment covering 96–111 (ELRREGRGGGRAHGPH) has biased composition (basic and acidic residues). Residues 116-136 (LLGPVIMGVGLFVFICANTLL) traverse the membrane as a helical segment. Residues 180 to 211 (AVGCAEPEIWDPSPRRGTSPVPSVRSLRSEPA) are disordered.

The protein belongs to the TMEM200 family.

It localises to the membrane. This Homo sapiens (Human) protein is Transmembrane protein 200B (TMEM200B).